The primary structure comprises 379 residues: Cinnamyl alcohol dehydrogenase 7 (379 aa).

Residues 1 to 13 (MAPTTTATAAAEQ) are compositionally biased toward low complexity. The segment at 1 to 21 (MAPTTTATAAAEQAPPPQHTR) is disordered. Position 60 (Cys60) interacts with Zn(2+). Position 62 (Ser62) interacts with NADP(+). His82, Glu83, Cys113, Cys116, Cys119, Cys127, and Cys185 together coordinate Zn(2+). NADP(+) is bound by residues Thr189, 210 to 215 (GLGGLG), 233 to 238 (STSPVK), Thr273, Gly297, and 320 to 322 (SCM).

It belongs to the zinc-containing alcohol dehydrogenase family. Homodimer. Requires Zn(2+) as cofactor. As to expression, expressed in roots, first internodes and panicles. Expressed in the vascular bundles and sclerenchyma cells below the epidermis in leaves and stems.

The catalysed reaction is (E)-cinnamyl alcohol + NADP(+) = (E)-cinnamaldehyde + NADPH + H(+). The enzyme catalyses (E)-coniferol + NADP(+) = (E)-coniferaldehyde + NADPH + H(+). It catalyses the reaction (E)-sinapyl alcohol + NADP(+) = (E)-sinapaldehyde + NADPH + H(+). It carries out the reaction (E)-4-coumaroyl alcohol + NADP(+) = (E)-4-coumaraldehyde + NADPH + H(+). The catalysed reaction is (E)-caffeyl alcohol + NADP(+) = (E)-caffeyl aldehyde + NADPH + H(+). It functions in the pathway aromatic compound metabolism; phenylpropanoid biosynthesis. Its function is as follows. Involved in lignin biosynthesis. May catalyze the final step specific for the production of lignin monomers, like coniferyl alcohol, sinapyl alcohol and 4-coumaryl alcohol. The polypeptide is Cinnamyl alcohol dehydrogenase 7 (Oryza sativa subsp. japonica (Rice)).